We begin with the raw amino-acid sequence, 662 residues long: Glutathione hydrolase 7 (662 aa).

The Cytoplasmic portion of the chain corresponds to 1–106 (MAAENEASQE…AAECSCRQDG (106 aa)). Phosphoserine occurs at positions 17, 72, 79, and 83. The interval 26 to 90 (SFPRLPEDEP…DGSPLRETRK (65 aa)) is disordered. Over residues 72-83 (SSSSEMGSQDGS) the composition is skewed to low complexity. Residues 107-127 (LTVIVTACLTFATGVTVALVM) form a helical; Signal-anchor for type II membrane protein membrane-spanning segment. Residues 128–662 (QIYFGDPQIF…SPDAAGATIL (535 aa)) are Extracellular-facing. Residues Asn-198, Asn-267, Asn-283, Asn-330, Asn-353, Asn-394, Asn-452, Asn-519, Asn-523, and Asn-586 are each glycosylated (N-linked (GlcNAc...) asparagine).

The protein belongs to the gamma-glutamyltransferase family. Interacts with TLCD3A. In terms of assembly, heterodimer composed of the light and heavy chains. The active site is located in the light chain. In terms of processing, cleaved by autocatalysis into a large and a small subunit and the autocatalytic cleavage is essential to the functional activation of the enzyme. Widely expressed, but at low level, except in the airway epithelial cells. Detected in brain, heart, kidney, liver, lung, spleen, testis and trachea.

The protein resides in the membrane. It carries out the reaction an N-terminal (5-L-glutamyl)-[peptide] + an alpha-amino acid = 5-L-glutamyl amino acid + an N-terminal L-alpha-aminoacyl-[peptide]. It catalyses the reaction glutathione + H2O = L-cysteinylglycine + L-glutamate. The catalysed reaction is an S-substituted glutathione + H2O = an S-substituted L-cysteinylglycine + L-glutamate. The protein operates within sulfur metabolism; glutathione metabolism. In terms of biological role, hydrolyzes and transfers gamma-glutamyl moieties from glutathione and other gamma-glutamyl compounds to acceptors. The sequence is that of Glutathione hydrolase 7 from Homo sapiens (Human).